A 234-amino-acid chain; its full sequence is Thiamine-phosphate synthase (234 aa).

4-amino-2-methyl-5-(diphosphooxymethyl)pyrimidine contacts are provided by residues 52–56 (QYRSK) and Asn84. Mg(2+)-binding residues include Asp85 and Asp104. Ser123 lines the 4-amino-2-methyl-5-(diphosphooxymethyl)pyrimidine pocket. 150-152 (SVT) contacts 2-[(2R,5Z)-2-carboxy-4-methylthiazol-5(2H)-ylidene]ethyl phosphate. Lys153 is a 4-amino-2-methyl-5-(diphosphooxymethyl)pyrimidine binding site. Gly180 provides a ligand contact to 2-[(2R,5Z)-2-carboxy-4-methylthiazol-5(2H)-ylidene]ethyl phosphate.

The protein belongs to the thiamine-phosphate synthase family. The cofactor is Mg(2+).

The enzyme catalyses 2-[(2R,5Z)-2-carboxy-4-methylthiazol-5(2H)-ylidene]ethyl phosphate + 4-amino-2-methyl-5-(diphosphooxymethyl)pyrimidine + 2 H(+) = thiamine phosphate + CO2 + diphosphate. The catalysed reaction is 2-(2-carboxy-4-methylthiazol-5-yl)ethyl phosphate + 4-amino-2-methyl-5-(diphosphooxymethyl)pyrimidine + 2 H(+) = thiamine phosphate + CO2 + diphosphate. It catalyses the reaction 4-methyl-5-(2-phosphooxyethyl)-thiazole + 4-amino-2-methyl-5-(diphosphooxymethyl)pyrimidine + H(+) = thiamine phosphate + diphosphate. Its pathway is cofactor biosynthesis; thiamine diphosphate biosynthesis; thiamine phosphate from 4-amino-2-methyl-5-diphosphomethylpyrimidine and 4-methyl-5-(2-phosphoethyl)-thiazole: step 1/1. Its function is as follows. Condenses 4-methyl-5-(beta-hydroxyethyl)thiazole monophosphate (THZ-P) and 2-methyl-4-amino-5-hydroxymethyl pyrimidine pyrophosphate (HMP-PP) to form thiamine monophosphate (TMP). The sequence is that of Thiamine-phosphate synthase from Nitrosospira multiformis (strain ATCC 25196 / NCIMB 11849 / C 71).